Reading from the N-terminus, the 719-residue chain is Potassium channel KOR2 (719 aa).

Topologically, residues methionine 1–arginine 63 are cytoplasmic. A helical transmembrane segment spans residues isoleucine 64 to phenylalanine 84. The Extracellular portion of the chain corresponds to serine 85–glutamine 93. The chain crosses the membrane as a helical span at residues leucine 94–leucine 114. Over alanine 115–lysine 137 the chain is Cytoplasmic. A helical membrane pass occupies residues glycine 138 to glycine 158. The Extracellular segment spans residues arginine 159–arginine 164. Residues tryptophan 165 to glutamate 185 traverse the membrane as a helical; Voltage-sensor segment. At lysine 186–lysine 199 the chain is on the cytoplasmic side. A helical membrane pass occupies residues leucine 200–threonine 220. Residues threonine 221–valine 255 lie on the Extracellular side of the membrane. Residues threonine 256–alanine 275 constitute an intramembrane region (pore-forming). Residues valine 276–valine 285 are Extracellular-facing. The helical transmembrane segment at valine 286–isoleucine 306 threads the bilayer. Topologically, residues valine 307–asparagine 719 are cytoplasmic. Leucine 383–glycine 503 contacts a nucleoside 3',5'-cyclic phosphate. 5 ANK repeats span residues lysine 523–lysine 556, aspartate 560–serine 589, phenylalanine 593–leucine 622, aspartate 624–cysteine 653, and aspartate 657–alanine 686.

It belongs to the potassium channel family. Plant (TC 1.A.1.4) subfamily.

It is found in the membrane. Functionally, probable outward-rectifying potassium channel. The sequence is that of Potassium channel KOR2 from Oryza sativa subsp. japonica (Rice).